The primary structure comprises 168 residues: Transcription antitermination protein NusB (168 aa).

It belongs to the NusB family.

Functionally, involved in transcription antitermination. Required for transcription of ribosomal RNA (rRNA) genes. Binds specifically to the boxA antiterminator sequence of the ribosomal RNA (rrn) operons. This chain is Transcription antitermination protein NusB, found in Prosthecochloris aestuarii (strain DSM 271 / SK 413).